A 254-amino-acid chain; its full sequence is 3-dehydroquinate dehydratase (254 aa).

3-dehydroquinate contacts are provided by residues 47-49 (EFR) and arginine 83. Histidine 144 functions as the Proton donor/acceptor in the catalytic mechanism. Lysine 171 (schiff-base intermediate with substrate) is an active-site residue. 3 residues coordinate 3-dehydroquinate: arginine 213, serine 232, and glutamine 236.

The protein belongs to the type-I 3-dehydroquinase family. As to quaternary structure, homodimer.

The catalysed reaction is 3-dehydroquinate = 3-dehydroshikimate + H2O. Its pathway is metabolic intermediate biosynthesis; chorismate biosynthesis; chorismate from D-erythrose 4-phosphate and phosphoenolpyruvate: step 3/7. Functionally, involved in the third step of the chorismate pathway, which leads to the biosynthesis of aromatic amino acids. Catalyzes the cis-dehydration of 3-dehydroquinate (DHQ) and introduces the first double bond of the aromatic ring to yield 3-dehydroshikimate. In Neisseria meningitidis serogroup C / serotype 2a (strain ATCC 700532 / DSM 15464 / FAM18), this protein is 3-dehydroquinate dehydratase.